The following is a 126-amino-acid chain: Small ribosomal subunit protein bS6 (126 aa).

Residues 107–126 (RDRERGERSERPRDDFAPAA) form a disordered region.

The protein belongs to the bacterial ribosomal protein bS6 family.

Its function is as follows. Binds together with bS18 to 16S ribosomal RNA. This Caulobacter sp. (strain K31) protein is Small ribosomal subunit protein bS6.